The following is a 249-amino-acid chain: DNA repair protein RecO (249 aa).

The protein belongs to the RecO family.

Functionally, involved in DNA repair and RecF pathway recombination. The sequence is that of DNA repair protein RecO from Polaromonas naphthalenivorans (strain CJ2).